Consider the following 526-residue polypeptide: GMP synthase [glutamine-hydrolyzing] (526 aa).

Residues 3-199 enclose the Glutamine amidotransferase type-1 domain; the sequence is KVAIIDFGSQ…FIKIAGCKTD (197 aa). Residue cysteine 83 is the Nucleophile of the active site. Active-site residues include histidine 174 and glutamate 176. Positions 200-392 constitute a GMPS ATP-PPase domain; that stretch reads WTMNSFLDEQ…LGISDEILMR (193 aa). 227–233 contributes to the ATP binding site; it reads SGGVDSS.

Homodimer.

The catalysed reaction is XMP + L-glutamine + ATP + H2O = GMP + L-glutamate + AMP + diphosphate + 2 H(+). It functions in the pathway purine metabolism; GMP biosynthesis; GMP from XMP (L-Gln route): step 1/1. Catalyzes the synthesis of GMP from XMP. The polypeptide is GMP synthase [glutamine-hydrolyzing] (Ehrlichia canis (strain Jake)).